Here is a 344-residue protein sequence, read N- to C-terminus: Lysophosphatidic acid receptor 6 (344 aa).

The Extracellular segment spans residues 1 to 19; sequence MVSVNSSHCFYNDSFKYTL. A glycan (N-linked (GlcNAc...) asparagine) is linked at N5. The helical transmembrane segment at 20–46 threads the bilayer; sequence YGCMFSMVFVLGLISNCVAIYIFICVL. Residues 47-55 are Cytoplasmic-facing; that stretch reads KVRNETTTY. A helical transmembrane segment spans residues 56–79; the sequence is MINLAMSDLLFVFTLPFRIFYFTT. Residues 80–92 are Extracellular-facing; the sequence is RNWPFGDLLCKIS. C89 and C168 form a disulfide bridge. A helical membrane pass occupies residues 93–112; that stretch reads VMLFYTNMYGSILFLTCISV. Residues 113–133 are Cytoplasmic-facing; that stretch reads DRFLAIVYPFKSKTLRTKRNA. The chain crosses the membrane as a helical span at residues 134–154; that stretch reads KIVCTGVWLTVIGGSAPAVFV. Topologically, residues 155 to 181 are extracellular; that stretch reads QSTHSQGNNASEACFENFPEATWKTYL. Residues 182–209 form a helical membrane-spanning segment; the sequence is SRIVIFIEIVGFFIPLILNVTCSSMVLK. Over 210–227 the chain is Cytoplasmic; sequence TLTKPVTLSRSKINKTKV. Residues 228–253 traverse the membrane as a helical segment; the sequence is LKMIFVHLIIFCFCFVPYNINLILYS. Topologically, residues 254-272 are extracellular; it reads LVRTQTFVNCSVVAAVRTM. The chain crosses the membrane as a helical span at residues 273-292; it reads YPITLCIAVSNCCFDPIVYY. A lipid anchor (S-palmitoyl cysteine) is attached at C284. At 293–344 the chain is on the cytoplasmic side; it reads FTSDTIQNSIKMKNWSVRRSDFRFSEVHGAENFIQHNLQTLKSKIFDNESAA.

This sequence belongs to the G-protein coupled receptor 1 family. Expressed ubiquitously, including in skin and hair follicle cells. Detected in both Henle's and Huxley's layers of the inner root sheath of the hair follicle and in suprabasal layers of the epidermis (at protein level). Expressed at low levels in peripheral blood leukocytes.

It is found in the cell membrane. Its function is as follows. Binds to oleoyl-L-alpha-lysophosphatidic acid (LPA). Intracellular cAMP is involved in the receptor activation. Important for the maintenance of hair growth and texture. This chain is Lysophosphatidic acid receptor 6 (LPAR6), found in Homo sapiens (Human).